Here is a 364-residue protein sequence, read N- to C-terminus: Adenine deaminase (364 aa).

Positions 25, 27, and 221 each coordinate Zn(2+). Glu224 (proton donor) is an active-site residue. Asp301 lines the Zn(2+) pocket. Asp302 contributes to the substrate binding site.

Belongs to the metallo-dependent hydrolases superfamily. Adenosine and AMP deaminases family. Adenine deaminase type 2 subfamily. The cofactor is Zn(2+).

It is found in the cytoplasm. The protein localises to the nucleus. It catalyses the reaction adenine + H2O + H(+) = hypoxanthine + NH4(+). In terms of biological role, catalyzes the hydrolytic deamination of adenine to hypoxanthine. Plays an important role in the purine salvage pathway and in nitrogen catabolism. Has no activity with adenosine as a substrate. The polypeptide is Adenine deaminase (aah1) (Emericella nidulans (strain FGSC A4 / ATCC 38163 / CBS 112.46 / NRRL 194 / M139) (Aspergillus nidulans)).